Here is a 692-residue protein sequence, read N- to C-terminus: Ena/VASP-like protein (692 aa).

The WH1 domain maps to 1-112 (MSEQSICQAR…NAMLFALNIM (112 aa)). Disordered regions lie at residues 116 to 310 (DGGP…VQKN), 466 to 518 (SAAM…YEES), and 531 to 650 (KLRK…NDVS). 2 stretches are compositionally biased toward polar residues: residues 123–132 (RQAQNIQNGP) and 159–169 (STTVSTLQINV). The span at 214 to 226 (SSKSTNKSSNRTS) shows a compositional bias: low complexity. Polar residues predominate over residues 231–267 (LQNSHCGSEPSTSQSSAFSPIRPSNGTVSRSIKQISL). Low complexity-rich tracts occupy residues 288–310 (PSLS…VQKN) and 466–479 (SAAM…APAP). Residues 480 to 506 (ASGPPPPPPPGPPPPSGGTPPPAPPLP) are compositionally biased toward pro residues. The interval 522–542 (GLAAALAGAKLRKVQRPEDGS) is EVH2 block A. The EVH2 stretch occupies residues 522 to 689 (GLAAALAGAK…DAIRQELSRI (168 aa)). A KLKR motif is present at residues 531 to 534 (KLRK). The tract at residues 563–580 (GGLMEEMNKLLAKRRKAA) is EVH2 block B. A compositionally biased stretch (polar residues) spans 597 to 617 (EDASLSSSPVTRGPTPQNSSD). Residues 618–628 (LGKKPWERSNS) are compositionally biased toward basic and acidic residues. The interval 655-689 (DFDRMKQEILEEVVRELHKVKEEIIDAIRQELSRI) is EVH2 block C.

The protein belongs to the Ena/VASP family. During embryonic and tadpole development, expressed in the cement gland, brain, neural tube, myotome and neural placodes, including the otic, lateral line and olfactory placodes. All isoforms show similar spatial expression patterns.

The protein resides in the cytoplasm. Its subcellular location is the cytoskeleton. It is found in the stress fiber. It localises to the cell projection. The protein localises to the lamellipodium. Functionally, ena/VASP proteins are actin-associated proteins involved in a range of processes dependent on cytoskeleton remodeling and cell polarity such as axon guidance and lamellipodial and filopodial dynamics in migrating cells. Evl enhances actin nucleation and polymerization. The protein is Ena/VASP-like protein of Xenopus laevis (African clawed frog).